We begin with the raw amino-acid sequence, 176 residues long: ATP-dependent protease subunit HslV (176 aa).

Thr2 is an active-site residue. 3 residues coordinate Na(+): Ala157, Cys160, and Thr163.

This sequence belongs to the peptidase T1B family. HslV subfamily. In terms of assembly, a double ring-shaped homohexamer of HslV is capped on each side by a ring-shaped HslU homohexamer. The assembly of the HslU/HslV complex is dependent on binding of ATP.

It is found in the cytoplasm. It catalyses the reaction ATP-dependent cleavage of peptide bonds with broad specificity.. Its activity is regulated as follows. Allosterically activated by HslU binding. Protease subunit of a proteasome-like degradation complex believed to be a general protein degrading machinery. The protein is ATP-dependent protease subunit HslV of Buchnera aphidicola subsp. Acyrthosiphon pisum (strain APS) (Acyrthosiphon pisum symbiotic bacterium).